A 92-amino-acid chain; its full sequence is UPF0250 protein Avin_08440 (92 aa).

Belongs to the UPF0250 family.

This chain is UPF0250 protein Avin_08440, found in Azotobacter vinelandii (strain DJ / ATCC BAA-1303).